Consider the following 452-residue polypeptide: Isocitrate dehydrogenase [NADP], mitochondrial (452 aa).

The N-terminal 39 residues, 1-39 (MAGYLRVVRSLCRASGSRPAWAPAALTAPTSQEQPRRHY), are a transit peptide targeting the mitochondrion. Residues lysine 45, lysine 48, lysine 67, and lysine 69 each carry the N6-acetyllysine modification. Lysine 80 and lysine 106 each carry N6-acetyllysine; alternate. An N6-succinyllysine; alternate mark is found at lysine 80 and lysine 106. NADP(+) is bound by residues 115-117 (TIT) and arginine 122. Threonine 117 lines the D-threo-isocitrate pocket. D-threo-isocitrate is bound by residues 134 to 140 (SPNGTIR) and arginine 149. At lysine 155 the chain carries N6-acetyllysine. Lysine 166 bears the N6-acetyllysine; alternate mark. Lysine 166 carries the N6-succinyllysine; alternate modification. Arginine 172 is a D-threo-isocitrate binding site. N6-acetyllysine; alternate is present on residues lysine 180 and lysine 193. N6-succinyllysine; alternate is present on residues lysine 180 and lysine 193. Lysine 199 carries the N6-acetyllysine modification. Lysine 256 carries the post-translational modification N6-acetyllysine; alternate. An N6-succinyllysine; alternate modification is found at lysine 256. An N6-acetyllysine mark is found at lysine 263, lysine 272, lysine 275, and lysine 280. Residue lysine 282 is modified to N6-acetyllysine; alternate. The residue at position 282 (lysine 282) is an N6-succinyllysine; alternate. Residue aspartate 291 coordinates Mn(2+). Lysine 299 contacts NADP(+). Position 314 (aspartate 314) interacts with Mn(2+). NADP(+) contacts are provided by residues 349–354 (GTVTRH) and asparagine 367. Lysine 384 is modified (N6-acetyllysine; alternate). Position 384 is an N6-succinyllysine; alternate (lysine 384). 3 positions are modified to N6-acetyllysine: lysine 400, lysine 413, and lysine 442.

This sequence belongs to the isocitrate and isopropylmalate dehydrogenases family. Homodimer. Mg(2+) serves as cofactor. Mn(2+) is required as a cofactor. In terms of processing, acetylation at Lys-413 dramatically reduces catalytic activity. Deacetylated by SIRT3.

Its subcellular location is the mitochondrion. It carries out the reaction D-threo-isocitrate + NADP(+) = 2-oxoglutarate + CO2 + NADPH. Its function is as follows. Plays a role in intermediary metabolism and energy production. It may tightly associate or interact with the pyruvate dehydrogenase complex. The polypeptide is Isocitrate dehydrogenase [NADP], mitochondrial (IDH2) (Homo sapiens (Human)).